Reading from the N-terminus, the 241-residue chain is Probable transcriptional regulatory protein PSHAb0060 (241 aa).

It belongs to the TACO1 family.

It is found in the cytoplasm. The chain is Probable transcriptional regulatory protein PSHAb0060 from Pseudoalteromonas translucida (strain TAC 125).